Consider the following 364-residue polypeptide: Mannose-1-phosphate guanyltransferase (364 aa).

The protein belongs to the transferase hexapeptide repeat family.

Its subcellular location is the cytoplasm. The catalysed reaction is alpha-D-mannose 1-phosphate + GTP + H(+) = GDP-alpha-D-mannose + diphosphate. It functions in the pathway nucleotide-sugar biosynthesis; GDP-alpha-D-mannose biosynthesis; GDP-alpha-D-mannose from alpha-D-mannose 1-phosphate (GTP route): step 1/1. Involved in cell wall synthesis where it is required for glycosylation. Involved in cell cycle progression through cell-size checkpoint. The chain is Mannose-1-phosphate guanyltransferase (MPG1) from Gibberella zeae (strain ATCC MYA-4620 / CBS 123657 / FGSC 9075 / NRRL 31084 / PH-1) (Wheat head blight fungus).